A 128-amino-acid chain; its full sequence is Fluoride-specific ion channel FluC (128 aa).

4 consecutive transmembrane segments (helical) span residues 3 to 23 (FSVI…RFLI), 34 to 54 (LFPV…GFLY), 69 to 89 (FITG…ETLL), and 100 to 120 (FLNI…AIIL). The Na(+) site is built by glycine 75 and threonine 78.

It belongs to the fluoride channel Fluc/FEX (TC 1.A.43) family.

Its subcellular location is the cell inner membrane. The enzyme catalyses fluoride(in) = fluoride(out). Na(+) is not transported, but it plays an essential structural role and its presence is essential for fluoride channel function. Fluoride-specific ion channel. Important for reducing fluoride concentration in the cell, thus reducing its toxicity. The sequence is that of Fluoride-specific ion channel FluC from Nitratiruptor sp. (strain SB155-2).